Consider the following 110-residue polypeptide: Cyclin-dependent protein kinase inhibitor SMR8 (110 aa).

As to quaternary structure, interacts with CDKA-1 and D-type cyclins. As to expression, expressed in the root vascular tissue.

In terms of biological role, probable cyclin-dependent protein kinase (CDK) inhibitor that functions as a repressor of mitosis in the endoreduplication cell cycle. In Arabidopsis thaliana (Mouse-ear cress), this protein is Cyclin-dependent protein kinase inhibitor SMR8.